Here is a 249-residue protein sequence, read N- to C-terminus: Probable transcriptional regulatory protein LIC_12886 (249 aa).

The protein belongs to the TACO1 family.

It localises to the cytoplasm. In Leptospira interrogans serogroup Icterohaemorrhagiae serovar copenhageni (strain Fiocruz L1-130), this protein is Probable transcriptional regulatory protein LIC_12886.